We begin with the raw amino-acid sequence, 310 residues long: MGRMRGEALAQEVLRLKRERNAVILAHSYQLPEVQEVADFVGDSLGLAREAQRTRAEVIVFCGVHFMAETAAILNPEKTVLLPDLEAGCSLADSIRPEDVLAWKAKHPDGIVVAYVNTKAEVKALADVCVTSANAVEVVSRLPQDRPIYFVPDMFLGAHVARATGRRLDLFPGECHVHAGIREEHLKALLEAHPGAEFLIHPECGCGSGCLYLKPDAKMLSTEGMVRYAKGAEAREFVVATEVGILHRLKKEAPEKAFFPVKPDAVCEYMKRITLEKVYLSLKEMRHVVRVPEEVAGRARRALEAMVAVG.

Iminosuccinate-binding residues include H27 and S44. Residue C89 participates in [4Fe-4S] cluster binding. Iminosuccinate contacts are provided by residues 115-117 and S132; that span reads YVN. C175 contributes to the [4Fe-4S] cluster binding site. Iminosuccinate is bound by residues 201 to 203 and T222; that span reads HPE. C267 serves as a coordination point for [4Fe-4S] cluster.

This sequence belongs to the quinolinate synthase family. Type 2 subfamily. Requires [4Fe-4S] cluster as cofactor.

The protein localises to the cytoplasm. It carries out the reaction iminosuccinate + dihydroxyacetone phosphate = quinolinate + phosphate + 2 H2O + H(+). The protein operates within cofactor biosynthesis; NAD(+) biosynthesis; quinolinate from iminoaspartate: step 1/1. In terms of biological role, catalyzes the condensation of iminoaspartate with dihydroxyacetone phosphate to form quinolinate. This chain is Quinolinate synthase, found in Thermus thermophilus (strain ATCC BAA-163 / DSM 7039 / HB27).